Reading from the N-terminus, the 483-residue chain is Transmembrane protein 39B (483 aa).

Asn9 is a glycosylation site (N-linked (GlcNAc...) asparagine). The next 7 helical transmembrane spans lie at 76–96 (HLLF…VHYI), 114–134 (TSLN…IVLA), 158–182 (LLVA…ILLF), 187–207 (FFNL…LQLG), 281–301 (EVLL…VWFV), 414–434 (VLNI…YSLL), and 440–460 (HHTI…FKLL).

It belongs to the TMEM39 family.

The protein resides in the endoplasmic reticulum membrane. Its function is as follows. May protect the cells against DNA damage caused by exposure to the cold-warming stress and facilitates tissue damage repair during the recovery phase. In Xenopus tropicalis (Western clawed frog), this protein is Transmembrane protein 39B.